A 364-amino-acid polypeptide reads, in one-letter code: Protein-glutamate methylesterase/protein-glutamine glutaminase 1 (364 aa).

The Response regulatory domain maps to 6–123 (KVLCVDDSAL…RDGMLDYSEK (118 aa)). Position 57 is a 4-aspartylphosphate (D57). One can recognise a CheB-type methylesterase domain in the interval 165–357 (LVSTEKLIIV…RRIMARLASM (193 aa)). Active-site residues include S177, H203, and D299.

Belongs to the CheB family. Phosphorylated by CheA. Phosphorylation of the N-terminal regulatory domain activates the methylesterase activity.

The protein localises to the cytoplasm. It catalyses the reaction [protein]-L-glutamate 5-O-methyl ester + H2O = L-glutamyl-[protein] + methanol + H(+). The enzyme catalyses L-glutaminyl-[protein] + H2O = L-glutamyl-[protein] + NH4(+). Functionally, involved in chemotaxis. Part of a chemotaxis signal transduction system that modulates chemotaxis in response to various stimuli. Catalyzes the demethylation of specific methylglutamate residues introduced into the chemoreceptors (methyl-accepting chemotaxis proteins or MCP) by CheR. Also mediates the irreversible deamidation of specific glutamine residues to glutamic acid. This chain is Protein-glutamate methylesterase/protein-glutamine glutaminase 1, found in Burkholderia mallei (strain ATCC 23344).